The following is a 540-amino-acid chain: uncharacterized protein (540 aa).

This is an uncharacterized protein from Escherichia coli (strain K12).